Consider the following 830-residue polypeptide: Pentatricopeptide repeat-containing protein At5g55740, chloroplastic (830 aa).

Residues 1-59 (MASLPFNTIPNKVPFSVSSKPSSKHHDEQAHSPSSTSYFHRVSSLCKNGEIKEALSLVT) constitute a chloroplast transit peptide. The tract at residues 15-36 (FSVSSKPSSKHHDEQAHSPSST) is disordered. PPR repeat units lie at residues 69–103 (GPEI…GDFY), 106–136 (NEYI…LRVR), 137–171 (NVFS…EIFP), 172–206 (DNFV…GLED), 207–237 (CVFV…IPDR), 238–272 (NAVA…GVEP), 273–307 (TRVT…GMEL), 308–338 (DNIL…MFEK), 339–373 (DVVT…KLKY), 374–408 (DCVT…SFES), 409–439 (DIVL…TVEK), 440–474 (DLIL…GVPP), 475–509 (NVIT…GIIP), 510–544 (NLIS…GLRP), 545–575 (NAFS…IIRN), 581–611 (LVSI…KLYS), 612–646 (ELPL…GLKP), 647–682 (DNIT…SMKP), and 683–713 (CLEH…MPFK). The type E motif stretch occupies residues 718 to 793 (MIQSLVASCN…KPGCSWIQIT (76 aa)). Residues 796-826 (EGVHVFVANDKTHTRINEIQMMLALLLYDMG) are type E(+) motif.

It belongs to the PPR family. PCMP-E subfamily.

It localises to the plastid. It is found in the chloroplast. Its function is as follows. Plays a major role in chloroplast RNA editing. Acts as a site-recognition transacting factor involved in the edition of the site 2 of ndhD (ndhD-2), which encodes a subunit of the NDH complex. This is Pentatricopeptide repeat-containing protein At5g55740, chloroplastic (CRR21) from Arabidopsis thaliana (Mouse-ear cress).